Here is a 324-residue protein sequence, read N- to C-terminus: Acetyl-coenzyme A carboxylase carboxyl transferase subunit alpha (324 aa).

The CoA carboxyltransferase C-terminal domain maps to 37-291 (KLEKRLDKLK…REFIIQEWLR (255 aa)).

Belongs to the AccA family. As to quaternary structure, acetyl-CoA carboxylase is a heterohexamer composed of biotin carboxyl carrier protein (AccB), biotin carboxylase (AccC) and two subunits each of ACCase subunit alpha (AccA) and ACCase subunit beta (AccD).

The protein localises to the cytoplasm. The enzyme catalyses N(6)-carboxybiotinyl-L-lysyl-[protein] + acetyl-CoA = N(6)-biotinyl-L-lysyl-[protein] + malonyl-CoA. It functions in the pathway lipid metabolism; malonyl-CoA biosynthesis; malonyl-CoA from acetyl-CoA: step 1/1. In terms of biological role, component of the acetyl coenzyme A carboxylase (ACC) complex. First, biotin carboxylase catalyzes the carboxylation of biotin on its carrier protein (BCCP) and then the CO(2) group is transferred by the carboxyltransferase to acetyl-CoA to form malonyl-CoA. This Chlamydia pneumoniae (Chlamydophila pneumoniae) protein is Acetyl-coenzyme A carboxylase carboxyl transferase subunit alpha.